We begin with the raw amino-acid sequence, 276 residues long: Pantothenate synthetase (276 aa).

26–33 contacts ATP; it reads MGFLHAGH. Residue His33 is the Proton donor of the active site. Gln57 lines the (R)-pantoate pocket. Beta-alanine is bound at residue Gln57. 143–146 serves as a coordination point for ATP; sequence GQKD. Residue Gln149 participates in (R)-pantoate binding. Residues Ile172 and 180 to 183 contribute to the ATP site; that span reads MSSR.

This sequence belongs to the pantothenate synthetase family. As to quaternary structure, homodimer.

The protein localises to the cytoplasm. The enzyme catalyses (R)-pantoate + beta-alanine + ATP = (R)-pantothenate + AMP + diphosphate + H(+). Its pathway is cofactor biosynthesis; (R)-pantothenate biosynthesis; (R)-pantothenate from (R)-pantoate and beta-alanine: step 1/1. Its function is as follows. Catalyzes the condensation of pantoate with beta-alanine in an ATP-dependent reaction via a pantoyl-adenylate intermediate. The protein is Pantothenate synthetase of Herpetosiphon aurantiacus (strain ATCC 23779 / DSM 785 / 114-95).